A 932-amino-acid chain; its full sequence is DNA mismatch repair protein MutS (932 aa).

ATP is bound at residue 620-627 (GPNMAGKS).

Belongs to the DNA mismatch repair MutS family.

This protein is involved in the repair of mismatches in DNA. It is possible that it carries out the mismatch recognition step. This protein has a weak ATPase activity. This Lachnoclostridium phytofermentans (strain ATCC 700394 / DSM 18823 / ISDg) (Clostridium phytofermentans) protein is DNA mismatch repair protein MutS.